The sequence spans 542 residues: Chaperonin GroEL 2 (542 aa).

Residues 30 to 33 (TLGP), K51, 87 to 91 (DGTTT), G415, and D496 each bind ATP.

The protein belongs to the chaperonin (HSP60) family. As to quaternary structure, forms a cylinder of 14 subunits composed of two heptameric rings stacked back-to-back. Interacts with the co-chaperonin GroES.

It localises to the cytoplasm. It carries out the reaction ATP + H2O + a folded polypeptide = ADP + phosphate + an unfolded polypeptide.. Functionally, together with its co-chaperonin GroES, plays an essential role in assisting protein folding. The GroEL-GroES system forms a nano-cage that allows encapsulation of the non-native substrate proteins and provides a physical environment optimized to promote and accelerate protein folding. This Chelativorans sp. (strain BNC1) protein is Chaperonin GroEL 2.